Here is a 144-residue protein sequence, read N- to C-terminus: Cytochrome c oxidase subunit 4 isoform 1, mitochondrial (144 aa).

The Mitochondrial matrix segment spans residues S1–N73. K4 bears the N6-acetyllysine; alternate mark. K4 carries the N6-succinyllysine; alternate modification. S31 and S33 each carry phosphoserine. Position 35 is an N6-acetyllysine; alternate (K35). Residue K35 is modified to N6-succinyllysine; alternate. K42 is modified (N6-acetyllysine). Residues E74–Y99 form a helical membrane-spanning segment. Residues V100–K144 are Mitochondrial intermembrane-facing.

Belongs to the cytochrome c oxidase IV family. Component of the cytochrome c oxidase (complex IV, CIV), a multisubunit enzyme composed of 14 subunits. The complex is composed of a catalytic core of 3 subunits MT-CO1, MT-CO2 and MT-CO3, encoded in the mitochondrial DNA, and 11 supernumerary subunits COX4I, COX5A, COX5B, COX6A, COX6B, COX6C, COX7A, COX7B, COX7C, COX8 and NDUFA4, which are encoded in the nuclear genome. The complex exists as a monomer or a dimer and forms supercomplexes (SCs) in the inner mitochondrial membrane with NADH-ubiquinone oxidoreductase (complex I, CI) and ubiquinol-cytochrome c oxidoreductase (cytochrome b-c1 complex, complex III, CIII), resulting in different assemblies (supercomplex SCI(1)III(2)IV(1) and megacomplex MCI(2)III(2)IV(2)). Interacts with PHB2; the interaction decreases in absence of SPHK2. Interacts with AFG1L. Interacts with ABCB7; this interaction allows the regulation of cellular iron homeostasis and cellular reactive oxygen species (ROS) levels in cardiomyocytes. Interacts with FLVCR2; this interaction occurs in the absence of heme and is disrupted upon heme binding. Interacts with IRGC.

It is found in the mitochondrion inner membrane. It functions in the pathway energy metabolism; oxidative phosphorylation. Functionally, component of the cytochrome c oxidase, the last enzyme in the mitochondrial electron transport chain which drives oxidative phosphorylation. The respiratory chain contains 3 multisubunit complexes succinate dehydrogenase (complex II, CII), ubiquinol-cytochrome c oxidoreductase (cytochrome b-c1 complex, complex III, CIII) and cytochrome c oxidase (complex IV, CIV), that cooperate to transfer electrons derived from NADH and succinate to molecular oxygen, creating an electrochemical gradient over the inner membrane that drives transmembrane transport and the ATP synthase. Cytochrome c oxidase is the component of the respiratory chain that catalyzes the reduction of oxygen to water. Electrons originating from reduced cytochrome c in the intermembrane space (IMS) are transferred via the dinuclear copper A center (CU(A)) of subunit 2 and heme A of subunit 1 to the active site in subunit 1, a binuclear center (BNC) formed by heme A3 and copper B (CU(B)). The BNC reduces molecular oxygen to 2 water molecules using 4 electrons from cytochrome c in the IMS and 4 protons from the mitochondrial matrix. This chain is Cytochrome c oxidase subunit 4 isoform 1, mitochondrial (COX4I1), found in Pithecia pithecia (White-faced saki).